The chain runs to 381 residues: Homoserine O-succinyltransferase (381 aa).

The 316-residue stretch at 45 to 360 (NAVLVCHALN…PHGHDAFLLD (316 aa)) folds into the AB hydrolase-1 domain. Ser151 (nucleophile) is an active-site residue. Residue Arg221 coordinates substrate. Residues Asp321 and His354 contribute to the active site. Asp355 lines the substrate pocket.

It belongs to the AB hydrolase superfamily. MetX family. As to quaternary structure, homodimer.

It is found in the cytoplasm. It catalyses the reaction L-homoserine + succinyl-CoA = O-succinyl-L-homoserine + CoA. It functions in the pathway amino-acid biosynthesis; L-methionine biosynthesis via de novo pathway; O-succinyl-L-homoserine from L-homoserine: step 1/1. Its function is as follows. Transfers a succinyl group from succinyl-CoA to L-homoserine, forming succinyl-L-homoserine. The sequence is that of Homoserine O-succinyltransferase from Burkholderia thailandensis (strain ATCC 700388 / DSM 13276 / CCUG 48851 / CIP 106301 / E264).